The sequence spans 208 residues: Methylthioribulose-1-phosphate dehydratase (208 aa).

Residues His99 and His101 each coordinate Zn(2+).

This sequence belongs to the aldolase class II family. MtnB subfamily. The cofactor is Zn(2+).

It carries out the reaction 5-(methylsulfanyl)-D-ribulose 1-phosphate = 5-methylsulfanyl-2,3-dioxopentyl phosphate + H2O. It functions in the pathway amino-acid biosynthesis; L-methionine biosynthesis via salvage pathway; L-methionine from S-methyl-5-thio-alpha-D-ribose 1-phosphate: step 2/6. Its function is as follows. Catalyzes the dehydration of methylthioribulose-1-phosphate (MTRu-1-P) into 2,3-diketo-5-methylthiopentyl-1-phosphate (DK-MTP-1-P). The chain is Methylthioribulose-1-phosphate dehydratase from Aquifex aeolicus (strain VF5).